A 1075-amino-acid polypeptide reads, in one-letter code: Ataxin-2-like protein (1075 aa).

M1 carries the N-acetylmethionine modification. The segment covering 1-12 has biased composition (low complexity); it reads MLKPQPLQQPSQ. Residues 1–115 are disordered; it reads MLKPQPLQQP…KGPPQSPVFE (115 aa). Residues 98 to 121 are interaction with MPL; the sequence is SARGQSTGKGPPQSPVFEGVYNNS. Phosphoserine is present on residues S103 and S111. Position 118 is a phosphotyrosine (Y118). A Sm domain is found at 122–199; that stretch reads RMLHFLTAVV…VMLVHFRNVD (78 aa). K207 is subject to N6-acetyllysine. S238 is subject to Phosphoserine. Position 264 is a phosphotyrosine (Y264). The residue at position 306 (S306) is a Phosphoserine. Y309 carries the phosphotyrosine modification. Residues 316 to 328 show a composition bias toward basic and acidic residues; sequence ENDDGRTEEEKHS. Disordered stretches follow at residues 316 to 521, 551 to 697, 733 to 770, 820 to 849, 865 to 940, and 1022 to 1045; these read ENDD…LEPQ, QFKL…SIPV, VSNS…MMQA, SNPR…EQPT, ATQL…SSFP, and PYIG…ADDR. Over residues 330 to 342 the composition is skewed to polar residues; sequence VQRQGSGRESPSL. A phosphoserine mark is found at S335 and S339. K348 participates in a covalent cross-link: Glycyl lysine isopeptide (Lys-Gly) (interchain with G-Cter in SUMO2). Y349 is subject to Phosphotyrosine. Position 361 is an asymmetric dimethylarginine (R361). The segment covering 363–380 has biased composition (low complexity); sequence GVRCSSSRGGRPGLSSLP. 2 positions are modified to phosphoserine: S391 and S409. The span at 421–433 shows a compositional bias: polar residues; that stretch reads TLSSPSNRPSGET. Residue S449 is modified to Phosphoserine. Composition is skewed to low complexity over residues 450 to 462 and 471 to 485; these read PKSA…SASC and VPTS…SSVS. A phosphoserine mark is found at S493 and S496. Residues 505-516 show a composition bias toward basic and acidic residues; that stretch reads DVKELSTKEPGR. 4 positions are modified to phosphoserine: S557, S558, S559, and S563. Over residues 571-584 the composition is skewed to basic and acidic residues; the sequence is ILKEEPKGKEKEVD. S594 carries the phosphoserine modification. T632 carries the phosphothreonine modification. Residues S634, S674, S680, and S684 each carry the phosphoserine modification. 2 stretches are compositionally biased toward low complexity: residues 678 to 694 and 761 to 770; these read STST…STPS and PASAPPMMQA. The segment covering 874–898 has biased composition (polar residues); the sequence is QPATTPTGSQPQSQHAAPSPVQHQA. Composition is skewed to low complexity over residues 931–940 and 1025–1037; these read SAQSPQSSFP and GHPQ…QAPG.

This sequence belongs to the ataxin-2 family. Interacts with MPL/TPOR and EPOR and dissociates after ligand stimulation. Interacts with DDX6, G3BP1, and ATXN2. Interacts with PRMT1. Interacts with CIC and ATXN1. Thrombopoietin triggers the phosphorylation on tyrosine residues in a way that is dependent on MPL C-terminal domain. In terms of processing, asymmetrically dimethylated. Probably methylated by PRMT1. As to expression, expressed at high levels in thymus, lymph node, spleen, fetal kidney and adult testis. Constitutively associated with MPL and EPOR in hematopoietic cells.

The protein localises to the membrane. The protein resides in the cytoplasm. Its subcellular location is the nucleus speckle. It is found in the cytoplasmic granule. In terms of biological role, involved in the regulation of stress granule and P-body formation. The polypeptide is Ataxin-2-like protein (ATXN2L) (Homo sapiens (Human)).